The following is a 237-amino-acid chain: Orotate phosphoribosyltransferase (237 aa).

Lysine 29 lines the 5-phospho-alpha-D-ribose 1-diphosphate pocket. Phenylalanine 37–phenylalanine 38 serves as a coordination point for orotate. 5-phospho-alpha-D-ribose 1-diphosphate-binding positions include tyrosine 79 to lysine 80, arginine 105, lysine 106, lysine 109, histidine 111, and aspartate 130 to alanine 138. Orotate-binding residues include serine 134 and arginine 162.

This sequence belongs to the purine/pyrimidine phosphoribosyltransferase family. PyrE subfamily. In terms of assembly, homodimer. Mg(2+) is required as a cofactor.

It catalyses the reaction orotidine 5'-phosphate + diphosphate = orotate + 5-phospho-alpha-D-ribose 1-diphosphate. The protein operates within pyrimidine metabolism; UMP biosynthesis via de novo pathway; UMP from orotate: step 1/2. Its function is as follows. Catalyzes the transfer of a ribosyl phosphate group from 5-phosphoribose 1-diphosphate to orotate, leading to the formation of orotidine monophosphate (OMP). This chain is Orotate phosphoribosyltransferase, found in Polaromonas naphthalenivorans (strain CJ2).